Here is a 114-residue protein sequence, read N- to C-terminus: Ferredoxin (114 aa).

2 residues coordinate [3Fe-4S] cluster: C9 and C17. The [4Fe-4S] cluster site is built by C21, C40, C43, and C46. One can recognise a 4Fe-4S ferredoxin-type domain in the interval 31 to 60 (RMLYINPDECVDCGACKPACRVEAIYWEGD). C50 is a binding site for [3Fe-4S] cluster.

The cofactor is [4Fe-4S] cluster. [3Fe-4S] cluster serves as cofactor.

Ferredoxins are iron-sulfur proteins that transfer electrons in a wide variety of metabolic reactions. This is Ferredoxin (fdxA) from Mycobacterium tuberculosis (strain ATCC 25618 / H37Rv).